The chain runs to 325 residues: Mediator of RNA polymerase II transcription subunit 30 (325 aa).

3 stretches are compositionally biased toward low complexity: residues 1–11 (MWKYGQNQGNQ), 109–122 (PPQQ…MGPQ), and 132–154 (GPQQ…QQQQ). Disordered stretches follow at residues 1–26 (MWKY…MMPM) and 109–176 (PPQQ…LAIS). The segment covering 158 to 169 (GSGGAPGAGGVG) has biased composition (gly residues).

It belongs to the Mediator complex subunit 30 family. As to quaternary structure, component of the Mediator complex.

It localises to the nucleus. In terms of biological role, component of the Mediator complex, a coactivator involved in the regulated transcription of nearly all RNA polymerase II-dependent genes. Mediator functions as a bridge to convey information from gene-specific regulatory proteins to the basal RNA polymerase II transcription machinery. Mediator is recruited to promoters by direct interactions with regulatory proteins and serves as a scaffold for the assembly of a functional preinitiation complex with RNA polymerase II and the general transcription factors. The protein is Mediator of RNA polymerase II transcription subunit 30 (MED30) of Drosophila pseudoobscura pseudoobscura (Fruit fly).